The following is a 377-amino-acid chain: SH2/SH3 adapter protein NCK1 (377 aa).

A2 carries the post-translational modification N-acetylalanine. The region spanning 2-61 (AEEVVVVAKFDYVAQQEQELDIKKNERLWLLDDSKSWWRVRNSMNKTGFVPSNYVERKNS) is the SH3 1 domain. S85, S89, S91, and S96 each carry phosphoserine. Y105 is subject to Phosphotyrosine. In terms of domain architecture, SH3 2 spans 106 to 165 (DLNMPAYVKFNYMAEREDELSLIKGTKVIVMEKCSDGWWRGSYNGQVGWFPSNYVTEEGD). S166 is modified (phosphoserine). One can recognise an SH3 3 domain in the interval 190–252 (QVLHVVQALY…PKNYVTVMQN (63 aa)). Positions 282 to 376 (WYYGKVTRHQ…GEKLYLVKHL (95 aa)) constitute an SH2 domain.

Interacts (via SH2 domain and SH3 domain 2) with EGFR. Interacts with PAK1 and SOS1. Interacts (via SH3 domains) with PKN2. Associates with BLNK, PLCG1, VAV1 and NCK1 in a B-cell antigen receptor-dependent fashion. Interacts with SOCS7. This interaction is required for nuclear import. Part of a complex containing PPP1R15B, PP1 and NCK1. Interacts with RALGPS1. Interacts with CAV2 (tyrosine phosphorylated form). Interacts with ADAM15. Interacts with FASLG. Directly interacts with RASA1. Interacts with isoform 4 of MINK1. Interacts with FLT1 (tyrosine phosphorylated). Interacts with KDR (tyrosine phosphorylated). Interacts (via SH2 domain) with EPHB1; activates the JUN cascade to regulate cell adhesion. Interacts with EPHA2. Interacts (via SH2 domain) with PDGFRB (tyrosine phosphorylated). Interacts with the inactive form of EIF2AK2/PKR. Interacts with PTPN1. Interacts with INSR/insulin receptor (in response to insulin stimulation); This interaction may mediate PTPN1 recruitment leading to INSR dephosphorylation. Interacts with IRS1. Post-translationally, phosphorylated on Ser and Tyr residues. Phosphorylated in response to activation of EGFR and FcERI. Phosphorylated by activated PDGFRB.

It is found in the cytoplasm. The protein localises to the endoplasmic reticulum. Its subcellular location is the nucleus. Functionally, adapter protein which associates with tyrosine-phosphorylated growth factor receptors, such as KDR and PDGFRB, or their cellular substrates. Maintains low levels of EIF2S1 phosphorylation by promoting its dephosphorylation by PP1. Plays a role in the DNA damage response, not in the detection of the damage by ATM/ATR, but for efficient activation of downstream effectors, such as that of CHEK2. Plays a role in ELK1-dependent transcriptional activation in response to activated Ras signaling. Modulates the activation of EIF2AK2/PKR by dsRNA. May play a role in cell adhesion and migration through interaction with ephrin receptors. In Homo sapiens (Human), this protein is SH2/SH3 adapter protein NCK1 (NCK1).